The chain runs to 928 residues: Arf guanine nucleotide exchange factor sec74 (928 aa).

Polar residues-rich tracts occupy residues 1–12 (MDESSRIASSSA) and 57–83 (TITS…STTD). Disordered regions lie at residues 1-152 (MDES…RPSS) and 227-249 (SLSS…EDFG). Ser-67 is modified (phosphoserine). 2 stretches are compositionally biased toward low complexity: residues 89-102 (GHSS…KVSS) and 115-132 (SKSS…TSSS). The 193-residue stretch at 228-420 (LSSNFSARTP…ECFYDNITYT (193 aa)) folds into the SEC7 domain. Residues 234–245 (ARTPASNQSSVS) show a composition bias toward polar residues. One can recognise a PH domain in the interval 548–677 (KVFKLGILIQ…WLVKINFVST (130 aa)).

It is found in the cytoplasm. The protein resides in the cell tip. Functionally, guanine nucleotide exchange factor for Arf GTPases, stimulating the nucleotide exchange from the GDP-bound to the GTP-bound form. Involved in vesicular transport. The polypeptide is Arf guanine nucleotide exchange factor sec74 (sec74) (Schizosaccharomyces pombe (strain 972 / ATCC 24843) (Fission yeast)).